Reading from the N-terminus, the 441-residue chain is Lysine histidine transporter 2 (441 aa).

At 1-32 (MGNSEMSASEVAAAKQKNVDDWLPITSSRNAK) the chain is on the cytoplasmic side. Residues 33–53 (WWYSAFHNVTAMVGAGVLSLP) traverse the membrane as a helical segment. Residues 54–58 (YAMSN) lie on the Extracellular side of the membrane. A helical transmembrane segment spans residues 59–79 (LGWGPGVTIMVMSWIITLYTL). Residues 80–110 (WQMVEMHEIVPGKRLDRYHELGQHAFGEKLG) are Cytoplasmic-facing. The chain crosses the membrane as a helical span at residues 111-131 (LWIVVPQQLIVEVGVDIVYMV). At 132–152 (TGGASLKKVHQLVCPDCKEIR) the chain is on the extracellular side. A helical transmembrane segment spans residues 153–173 (TTFWIMIFASVHFVISHLPNF). Over 174–175 (NS) the chain is Cytoplasmic. Residues 176 to 196 (ISIISLAAAVMSLTYSTIAWA) traverse the membrane as a helical segment. Topologically, residues 197–222 (ASVHKGVHPDVDYSPRASTDVGKVFN) are extracellular. The helical transmembrane segment at 223 to 243 (FLNALGDVAFAYAGHNVVLEI) threads the bilayer. At 244-263 (QATIPSTPEMPSKVPMWRGV) the chain is on the cytoplasmic side. The chain crosses the membrane as a helical span at residues 264-284 (IVAYIVVAICYFPVAFLGYYI). The Extracellular portion of the chain corresponds to 285–300 (FGNSVDDNILITLEKP). The helical transmembrane segment at 301–321 (IWLIAMANMFVVIHVIGSYQI) threads the bilayer. The Cytoplasmic portion of the chain corresponds to 322–347 (FAMPVFDMLETVLVKKMNFNPSFKLR). The helical transmembrane segment at 348–370 (FITRSLYVAFTMIVAICVPFFGG) threads the bilayer. At 371–373 (LLG) the chain is on the extracellular side. A helical membrane pass occupies residues 374-396 (FFGGFAFAPTTYYLPCIMWLVLK). The Cytoplasmic segment spans residues 397–406 (KPKRFGLSWT). A helical transmembrane segment spans residues 407-427 (ANWFCIIVGVLLTILAPIGGL). The Extracellular portion of the chain corresponds to 428–441 (RTIIINAKTYKFFS).

It belongs to the amino acid/polyamine transporter 2 family. Amino acid/auxin permease (AAAP) (TC 2.A.18.2) subfamily. In terms of tissue distribution, expressed in flower buds and to lower levels in leaves and stems. Not detected in roots and siliques. Restricted to the tapetum cell layer.

It localises to the cell membrane. Its activity is regulated as follows. Inhibited by diethylstibestrol (DES), 2,4-dinitrophenol (DNP) and carbonlycyanide m-chlorophenylhydrazone (CCCP). Amino acid-proton symporter. Transporter with a broad specificity for neutral and acidic amino acids. Basic amino acids are only marginally transported. Involved in import of amino acids into the tapetum cells for synthesis of compounds important for microspore structure. The protein is Lysine histidine transporter 2 (LHT2) of Arabidopsis thaliana (Mouse-ear cress).